The sequence spans 168 residues: Small ribosomal subunit protein uS5 (168 aa).

In terms of domain architecture, S5 DRBM spans 14 to 77; the sequence is FEERVVSINR…EAAKKNLITV (64 aa).

This sequence belongs to the universal ribosomal protein uS5 family. As to quaternary structure, part of the 30S ribosomal subunit. Contacts proteins S4 and S8.

With S4 and S12 plays an important role in translational accuracy. In terms of biological role, located at the back of the 30S subunit body where it stabilizes the conformation of the head with respect to the body. The sequence is that of Small ribosomal subunit protein uS5 from Lactococcus lactis subsp. lactis (strain IL1403) (Streptococcus lactis).